Here is a 196-residue protein sequence, read N- to C-terminus: ATP-dependent Clp protease proteolytic subunit (196 aa).

Catalysis depends on Ser-98, which acts as the Nucleophile. His-123 is a catalytic residue.

The protein belongs to the peptidase S14 family. In terms of assembly, fourteen ClpP subunits assemble into 2 heptameric rings which stack back to back to give a disk-like structure with a central cavity, resembling the structure of eukaryotic proteasomes.

The protein resides in the cytoplasm. It catalyses the reaction Hydrolysis of proteins to small peptides in the presence of ATP and magnesium. alpha-casein is the usual test substrate. In the absence of ATP, only oligopeptides shorter than five residues are hydrolyzed (such as succinyl-Leu-Tyr-|-NHMec, and Leu-Tyr-Leu-|-Tyr-Trp, in which cleavage of the -Tyr-|-Leu- and -Tyr-|-Trp bonds also occurs).. In terms of biological role, cleaves peptides in various proteins in a process that requires ATP hydrolysis. Has a chymotrypsin-like activity. Plays a major role in the degradation of misfolded proteins. The sequence is that of ATP-dependent Clp protease proteolytic subunit from Lactiplantibacillus plantarum (strain ATCC BAA-793 / NCIMB 8826 / WCFS1) (Lactobacillus plantarum).